The following is a 53-amino-acid chain: ATP synthase protein 8 (53 aa).

The helical transmembrane segment at 5–25 (APISWLTLFFVFSITLVIFNI) threads the bilayer.

The protein belongs to the ATPase protein 8 family. F-type ATPases have 2 components, CF(1) - the catalytic core - and CF(0) - the membrane proton channel.

Its subcellular location is the mitochondrion membrane. Mitochondrial membrane ATP synthase (F(1)F(O) ATP synthase or Complex V) produces ATP from ADP in the presence of a proton gradient across the membrane which is generated by electron transport complexes of the respiratory chain. F-type ATPases consist of two structural domains, F(1) - containing the extramembraneous catalytic core and F(0) - containing the membrane proton channel, linked together by a central stalk and a peripheral stalk. During catalysis, ATP synthesis in the catalytic domain of F(1) is coupled via a rotary mechanism of the central stalk subunits to proton translocation. Part of the complex F(0) domain. Minor subunit located with subunit a in the membrane. The sequence is that of ATP synthase protein 8 from Aedes aegypti (Yellowfever mosquito).